The chain runs to 234 residues: LRP chaperone MESD (234 aa).

The first 33 residues, 1 to 33 (MAASRWARKAVVLLCASDLLLLLLLLPPPGSCA), serve as a signal peptide directing secretion. The chaperone domain stretch occupies residues 1–164 (MAASRWARKA…DRAIFMLRDG (164 aa)). Disordered stretches follow at residues 31–95 (SCAA…DFSK) and 187–234 (GQVY…REDL). Residues 54–70 (DIRDYNDADMARLLEQW) are compositionally biased toward basic and acidic residues. The segment covering 71–80 (EKDDDIEEGD) has biased composition (acidic residues). Residues 165 to 204 (SYAWEIKDFLVGQDRCADVTLEGQVYPGKGGGSKEKNKTK) form an escort domain region. A compositionally biased stretch (basic and acidic residues) spans 196-234 (GSKEKNKTKQDKGKKKKEGDLKSRSSKEENRAGNKREDL). N-linked (GlcNAc...) asparagine glycosylation occurs at N201. The Prevents secretion from ER signature appears at 231–234 (REDL).

The protein belongs to the MESD family. In terms of assembly, monomer. Interacts with LRP5; the interaction prevents LRP5 from forming aggregates and chaperones LRP6 to the plasma membrane. Interacts with LRP6; the interaction prevents LRP6 from forming aggregates and chaperones LRP6 to the plasma membrane. Interacts with LRP4; the interaction promotes glycosylation of LRP4 and its cell-surface expression.

It localises to the endoplasmic reticulum. Chaperone specifically assisting the folding of beta-propeller/EGF modules within the family of low-density lipoprotein receptors (LDLRs). Acts as a modulator of the Wnt pathway through chaperoning the coreceptors of the canonical Wnt pathway, LRP5 and LRP6, to the plasma membrane. Essential for specification of embryonic polarity and mesoderm induction. Plays an essential role in neuromuscular junction (NMJ) formation by promoting cell-surface expression of LRP4. May regulate phagocytosis of apoptotic retinal pigment epithelium (RPE) cells. The protein is LRP chaperone MESD of Homo sapiens (Human).